A 258-amino-acid polypeptide reads, in one-letter code: L-aspartate dehydrogenase 1 (258 aa).

The NAD(+) site is built by Ala121 and Asn181. The active site involves His211.

Belongs to the L-aspartate dehydrogenase family.

It catalyses the reaction L-aspartate + NADP(+) + H2O = oxaloacetate + NH4(+) + NADPH + H(+). The enzyme catalyses L-aspartate + NAD(+) + H2O = oxaloacetate + NH4(+) + NADH + H(+). It participates in cofactor biosynthesis; NAD(+) biosynthesis; iminoaspartate from L-aspartate (dehydrogenase route): step 1/1. Its function is as follows. Specifically catalyzes the NAD or NADP-dependent dehydrogenation of L-aspartate to iminoaspartate. The polypeptide is L-aspartate dehydrogenase 1 (Bordetella bronchiseptica (strain ATCC BAA-588 / NCTC 13252 / RB50) (Alcaligenes bronchisepticus)).